The primary structure comprises 209 residues: Small ribosomal subunit protein uS4 (209 aa).

Residues 98-158 (SRVDNIVYRL…EKSRSLAAIK (61 aa)) enclose the S4 RNA-binding domain.

Belongs to the universal ribosomal protein uS4 family. In terms of assembly, part of the 30S ribosomal subunit. Contacts protein S5. The interaction surface between S4 and S5 is involved in control of translational fidelity.

One of the primary rRNA binding proteins, it binds directly to 16S rRNA where it nucleates assembly of the body of the 30S subunit. Its function is as follows. With S5 and S12 plays an important role in translational accuracy. This chain is Small ribosomal subunit protein uS4, found in Pseudothermotoga lettingae (strain ATCC BAA-301 / DSM 14385 / NBRC 107922 / TMO) (Thermotoga lettingae).